The following is a 454-amino-acid chain: Ornithine aminotransferase (454 aa).

Position 280 is an N6-(pyridoxal phosphate)lysine (lysine 280).

It belongs to the class-III pyridoxal-phosphate-dependent aminotransferase family. The cofactor is pyridoxal 5'-phosphate.

It localises to the cytoplasm. The catalysed reaction is a 2-oxocarboxylate + L-ornithine = L-glutamate 5-semialdehyde + an L-alpha-amino acid. The protein operates within amino-acid biosynthesis; L-proline biosynthesis; L-glutamate 5-semialdehyde from L-ornithine: step 1/1. This chain is Ornithine aminotransferase (otaA), found in Emericella nidulans (strain FGSC A4 / ATCC 38163 / CBS 112.46 / NRRL 194 / M139) (Aspergillus nidulans).